A 641-amino-acid polypeptide reads, in one-letter code: Calpain-6 (641 aa).

The Calpain catalytic domain maps to 26–343 (LFCDPTFLPE…FHKLNVCRNV (318 aa)). Positions 344–495 (NNPIFGRKEL…IFSEVPVQLR (152 aa)) are domain III. The 124-residue stretch at 498–621 (TLDMPKMSCW…YLRKKGGPTA (124 aa)) folds into the C2 domain.

It belongs to the peptidase C2 family. Interacts (via domain III) with microtubules. Interacts (via domain II) with ARHGEF2 (via the N-terminal zinc finger). In terms of tissue distribution, expressed only in placenta.

It is found in the cytoplasm. Its subcellular location is the perinuclear region. The protein resides in the cytoskeleton. It localises to the spindle. Functionally, microtubule-stabilizing protein that may be involved in the regulation of microtubule dynamics and cytoskeletal organization. May act as a regulator of RAC1 activity through interaction with ARHGEF2 to control lamellipodial formation and cell mobility. Does not seem to have protease activity as it has lost the active site residues. This is Calpain-6 (CAPN6) from Homo sapiens (Human).